Reading from the N-terminus, the 585-residue chain is BURP domain-containing protein 17 (585 aa).

The N-terminal stretch at 1 to 20 (MDRIFARFFCFLLIAAVSHA) is a signal peptide. Positions 63 to 82 (GQRNYKSSVSHVAERSHRVD) are disordered. Residues 363–584 (FFLEKNLQQG…QPDAVVWTRR (222 aa)) enclose the BURP domain.

Expressed in leaves.

The protein is BURP domain-containing protein 17 (BURP17) of Oryza sativa subsp. japonica (Rice).